Here is a 618-residue protein sequence, read N- to C-terminus: MAKLRSATTTEGRKRAGARALWRATGMTDSDFGKPIIAVVNSFTQFVPGHVHLNQLSELMGETITAAGGVPKEFNTIAIDDGIAMGHGGMLYSLPSRDLIADSVEYMVNGHCADAMICISNCDKITPGMMLAALRLNIPVIFVSGGPMEAGKTKLANIDIKLDLVDAMVKGADESVSDADSDQVERSACPTCGSCSGMFTANSMNCLLEAIGLALPGNGTTLATHKDRKQLYVEAGARIVDLCREYYQKDNQEVLPRAIANKTAFMNAMVVDIAMGGSSNTVLHLLAAAQEAGVDFDMSHIDALSRKTPFLCKVAPATPEYHIEDVHRAGGMMAIVRELGKAGLVDMSVNHVAGSTMAELVKKWDATDPTNEAARKFYRAGPAGIRTTKAMSQECRWDEGDNDREHGCIRSVEHAFRQDGGLAVLSGNLAVDGCVVKSAGVVDDMLHFEGTAVVYESQDDSVEGILNDEVKAGDVVVIRYEGPKGGPGMQEMLYPTSYLKSKGLAEKCALITDGRFSGGTSGLSIGHVSPEAASGGAIAYVENGDKIIIDIATREITLALSDAELEARKQKQLARGKQAYKPLDRQRYVSSALKAYALLATSADKGAVRDLAKLEELS.

Aspartate 81 lines the Mg(2+) pocket. Cysteine 122 is a binding site for [2Fe-2S] cluster. Mg(2+) is bound by residues aspartate 123 and lysine 124. An N6-carboxylysine modification is found at lysine 124. Cysteine 195 contributes to the [2Fe-2S] cluster binding site. A Mg(2+)-binding site is contributed by glutamate 491. Residue serine 517 is the Proton acceptor of the active site.

Belongs to the IlvD/Edd family. As to quaternary structure, homodimer. Requires [2Fe-2S] cluster as cofactor. Mg(2+) serves as cofactor.

The catalysed reaction is (2R)-2,3-dihydroxy-3-methylbutanoate = 3-methyl-2-oxobutanoate + H2O. The enzyme catalyses (2R,3R)-2,3-dihydroxy-3-methylpentanoate = (S)-3-methyl-2-oxopentanoate + H2O. The protein operates within amino-acid biosynthesis; L-isoleucine biosynthesis; L-isoleucine from 2-oxobutanoate: step 3/4. It participates in amino-acid biosynthesis; L-valine biosynthesis; L-valine from pyruvate: step 3/4. Functionally, functions in the biosynthesis of branched-chain amino acids. Catalyzes the dehydration of (2R,3R)-2,3-dihydroxy-3-methylpentanoate (2,3-dihydroxy-3-methylvalerate) into 2-oxo-3-methylpentanoate (2-oxo-3-methylvalerate) and of (2R)-2,3-dihydroxy-3-methylbutanoate (2,3-dihydroxyisovalerate) into 2-oxo-3-methylbutanoate (2-oxoisovalerate), the penultimate precursor to L-isoleucine and L-valine, respectively. This is Dihydroxy-acid dehydratase 1 from Pseudoalteromonas translucida (strain TAC 125).